The sequence spans 503 residues: uncharacterized protein (503 aa).

Positions 437–465 (LNKDLILENLIETENENDKQEFQKLLRTI) form a coiled coil.

It belongs to the IIV-6 467R family.

This is an uncharacterized protein from Invertebrate iridescent virus 6 (IIV-6).